The sequence spans 127 residues: Small ribosomal subunit protein bS6 (127 aa).

A disordered region spans residues 99-127 (PLPAPRVVPGSEPAAAPQEQPAANSEAAS). Over residues 109-127 (SEPAAAPQEQPAANSEAAS) the composition is skewed to low complexity.

This sequence belongs to the bacterial ribosomal protein bS6 family.

Its function is as follows. Binds together with bS18 to 16S ribosomal RNA. This Parasynechococcus marenigrum (strain WH8102) protein is Small ribosomal subunit protein bS6.